The primary structure comprises 552 residues: MPSGRLQQQFIRLWQCCDGKTQDTTLNELADLLNCSRRHMRTLLNTMQARGWLTWEAEVGRGKRSRLTFLYTGLALQQQRAEDLLEQDRIDQLVQLVGDKSAVRQMLISHLGRSFRQGRHILRVLYYRPMHNLLPGTALRRSETHIARQIFSSLTRVNEENGELEADIAHHWQQISPLLWRFYLRPGIHFHHGRELEMEDVIASLTRINTLPLYSHITKIDSPTAWTLDIHLSQPDRWLPWLLGQVPAMILSREWETLANFASHPIGTGPYAVRRNTPNQLKILAFDDYFGYRALIDEVNVWVLPDISEEPACGLMLEGPIQGGEKAIESRLEKGCYYLLFDARTPRGAHPQVREWVSHVLSPTNLLYHADEPLQQLWFPAYGLLPRWHHARPGPGEKPAGLETLTLTFYREHIEHRVIARIMSALLAEHQVHLHIQEIDYDQWHAGEIESDIWLNSANFTLPLDFSLFAHLCEVPLLQNCIPRDWQDDAAQWRAGEMNLANWCQQLLANKAIVPLIHHWLIIQGQRSMRGLRMNTLGWFDFKSAWFAPPDP.

Positions 1–116 constitute an HTH marR-type domain; that stretch reads MPSGRLQQQF…LISHLGRSFR (116 aa). Positions 26–49 form a DNA-binding region, H-T-H motif; sequence LNELADLLNCSRRHMRTLLNTMQA. A solute-binding region spans residues 163 to 493; that stretch reads ELEADIAHHW…RDWQDDAAQW (331 aa).

Its function is as follows. Activates the small RNA gene sgrS under glucose-phosphate stress conditions as well as yfdZ. Represses its own transcription under both stress and non-stress conditions. Might act as a sensor of the intracellular accumulation of phosphoglucose by binding these molecules in its C-terminal solute-binding domain. This chain is HTH-type transcriptional regulator SgrR, found in Salmonella choleraesuis (strain SC-B67).